Reading from the N-terminus, the 1169-residue chain is MKSMIANYISEDNRFQELDEVFGQENILVTGLSPSAKATIIAEKYLKDHKQMLLVTNNLYQADKIETDILQYVDDSEVYKYPVQDIMTEEFSTQSPQLMSERVRTLTALAQGEKGLFIVPLNGFKKWLTPVDLWKDHQMTLKVGQDIDVDAFLNKLVNMGYRRESVVSHIGEFSLRGGIIDIYPLIGTPVRIELFDTEVDSIRDFDVETQRSNDNINQVEITTASDYIITDEVIQHLQNELKKAYEYTRPKIEKSVRNDLKETYESFKLFESTFFDHQLLRRLVSFMYEKPSTLIDYFQKNAIIVVDEFNRIKETEETLTTEVEDFMSNLIESGNGFIGQGFMKYESFDALLEQHAVAYFTLFTSSMQVPLQHIIKFSCKPVQQFYGQYDIMRSEFQRYVHQDYTVVVLVETETKVERIQSMLNEMHIPTVSNIHEDIDGGQVVVTEGSLSEGFELPYMQLVVITERELFKTRQKKQRKRTKTISNAEKIKSYQDLNVGDYIVHVHHGVGRYLGVETLEVGDTHRDYIKLQYKGTDQLFVPVDQMDQVQKYVASEDKSPRLNKLGGTEWKKTKAKVQQSVEDIADELIDLYKEREMSVGYQYGQDTAEQSAFEHDFPYELTPDQSKSIDEIKGDMERARPMDRLLCGDVGYGKTEVAVRAAFKAVMDGKQVAFLVPTTILAQQHYETLLERMQDFPVEIQLVSRFRTAKEIRETKEGLKSGYVDIVVGTHKLLGKDIQYKDLGLLIVDEEQRFGVRHKERIKTLKKNVDVLTLTATPIPRTLHMSMLGVRDLSVIETPPENRFPVQTYVLEQNTNFIKEALERELSRDGQVFYLYNKVQSIYEKREQLQRLMPDANIAVAHGQMTERDLEETMLSFINHEYDILVTTTIIETGVDVPNANTLIIEEADRFGLSQLYQLRGRVGRSSRIGYAYFLHPANKVLNETAEERLQAIKEFTELGSGFKIAMRDLNIRGAGNLLGKQQHGFIDSVGFDLYSQMLEEAVNEKRGIKEESPDAPDIEVELHLDAYLPAEYIQSEQAKIEIYKKLRKVETEEQLFDVKDELIDRFNDYPIEVERLLDIVEIKVHALHAGVELIKDKGKSIQIILSPKATEDINGEELFKQTQPLGRAMKVGVQNNAMNVTLTKSKQWLDSLKFLVRCIEESMAIKDED.

Positions 634-795 (DMERARPMDR…MLGVRDLSVI (162 aa)) constitute a Helicase ATP-binding domain. ATP is bound at residue 647-654 (GDVGYGKT). The short motif at 748–751 (DEEQ) is the DEEQ box element. The 162-residue stretch at 809–970 (VLEQNTNFIK…GFKIAMRDLN (162 aa)) folds into the Helicase C-terminal domain.

In the N-terminal section; belongs to the UvrB family. This sequence in the C-terminal section; belongs to the helicase family. RecG subfamily.

Its subcellular location is the cytoplasm. Couples transcription and DNA repair by recognizing RNA polymerase (RNAP) stalled at DNA lesions. Mediates ATP-dependent release of RNAP and its truncated transcript from the DNA, and recruitment of nucleotide excision repair machinery to the damaged site. The polypeptide is Transcription-repair-coupling factor (Staphylococcus epidermidis (strain ATCC 35984 / DSM 28319 / BCRC 17069 / CCUG 31568 / BM 3577 / RP62A)).